Reading from the N-terminus, the 505-residue chain is 6-phosphofructo-2-kinase/fructose-2,6-bisphosphatase 2 (505 aa).

The tract at residues 1 to 20 (MSGASSSEQNNNSYETKTPN) is disordered. N-acetylserine is present on Ser-2. The interval 2-248 (SGASSSEQNN…VYYLMNIHVQ (247 aa)) is 6-phosphofructo-2-kinase. Ser-29 carries the phosphoserine; by PKA modification. 45–53 (GLPARGKTY) is a binding site for ATP. Residues Arg-78 and Arg-102 each contribute to the beta-D-fructose 6-phosphate site. The active site involves Asp-128. Residues Thr-130 and Arg-136 each contribute to the beta-D-fructose 6-phosphate site. Cys-158 is a catalytic residue. 167 to 172 (NILEVK) contacts ATP. Beta-D-fructose 6-phosphate contacts are provided by Lys-172, Arg-193, and Tyr-197. Residues 249-505 (PRTIYLCRHG…RAQDMQEGAD (257 aa)) form a fructose-2,6-bisphosphatase region. Arg-256 lines the beta-D-fructose 2,6-bisphosphate pocket. The Tele-phosphohistidine intermediate role is filled by His-257. Residues Asn-263 and Gly-269 each contribute to the beta-D-fructose 2,6-bisphosphate site. Catalysis depends on Glu-326, which acts as the Proton donor/acceptor. Residues Tyr-337, Arg-351, Lys-355, Tyr-366, Gln-392, and Arg-396 each contribute to the beta-D-fructose 2,6-bisphosphate site. 348-351 (FALR) is a binding site for ATP. ATP is bound by residues 392–396 (QAVMR) and Tyr-428. Residues 445-505 (HRDKPTNNFP…RAQDMQEGAD (61 aa)) form a disordered region. Residues 450-476 (TNNFPKNQTPVRMRRNSFTPLSSSNTI) show a composition bias toward polar residues. Residue Ser-466 is modified to Phosphoserine; by AMPK. A phosphothreonine mark is found at Thr-468 and Thr-475. Phosphoserine; by BRAF is present on Ser-483. Ser-486 and Ser-493 each carry phosphoserine.

This sequence in the C-terminal section; belongs to the phosphoglycerate mutase family. As to quaternary structure, homodimer. Forms a heterodimer with PFKFB3. In terms of processing, phosphorylation by AMPK stimulates activity. In terms of tissue distribution, heart.

It carries out the reaction beta-D-fructose 2,6-bisphosphate + H2O = beta-D-fructose 6-phosphate + phosphate. It catalyses the reaction beta-D-fructose 6-phosphate + ATP = beta-D-fructose 2,6-bisphosphate + ADP + H(+). Its activity is regulated as follows. Phosphorylation results in the activation of the kinase activity. Functionally, synthesis and degradation of fructose 2,6-bisphosphate. The protein is 6-phosphofructo-2-kinase/fructose-2,6-bisphosphatase 2 of Homo sapiens (Human).